A 403-amino-acid chain; its full sequence is Acetyl-CoA acetyltransferase IB (403 aa).

The active-site Acyl-thioester intermediate is the Cys91. Residues His353 and Cys383 each act as proton acceptor in the active site. The short motif at Ala401–Leu403 is the Microbody targeting signal element.

Belongs to the thiolase-like superfamily. Thiolase family. As to quaternary structure, multimeric.

The protein resides in the peroxisome. It catalyses the reaction 2 acetyl-CoA = acetoacetyl-CoA + CoA. The protein operates within metabolic intermediate biosynthesis; (R)-mevalonate biosynthesis; (R)-mevalonate from acetyl-CoA: step 1/3. The sequence is that of Acetyl-CoA acetyltransferase IB (PACTB) from Candida tropicalis (Yeast).